The following is a 573-amino-acid chain: ESX-1 secretion system protein EccA1 (573 aa).

334–341 (GPPGTGKT) contributes to the ATP binding site.

Belongs to the CbxX/CfxQ family. In terms of assembly, part of the ESX-1 / type VII secretion system (T7SS), which is composed of cytosolic and membrane components.

Its subcellular location is the cytoplasm. Its function is as follows. Part of the ESX-1 specialized secretion system, which delivers several virulence factors to host cells during infection, including the key virulence factors EsxA (ESAT-6) and EsxB (CFP-10). EccA1 exhibits ATPase activity and may provide energy for the export of ESX-1 substrates. The sequence is that of ESX-1 secretion system protein EccA1 from Mycobacterium tuberculosis (strain CDC 1551 / Oshkosh).